The sequence spans 459 residues: uncharacterized protein (459 aa).

N6-(pyridoxal phosphate)lysine is present on lysine 285.

The protein belongs to the class-III pyridoxal-phosphate-dependent aminotransferase family.

It localises to the cytoplasm. This is an uncharacterized protein from Schizosaccharomyces pombe (strain 972 / ATCC 24843) (Fission yeast).